We begin with the raw amino-acid sequence, 312 residues long: NADPH-dependent alpha-keto amide reductase (312 aa).

NADPH is bound by residues G25, T26, R27, and D59. Active-site proton donor residues include Y64 and H122. S123 bears the Phosphoserine mark. NADPH-binding residues include S157, Q179, S208, L210, T257, T258, S259, S260, K261, and R264.

It belongs to the aldo/keto reductase family. As to quaternary structure, monomer. The N-terminus is blocked.

It localises to the cytoplasm. The protein resides in the nucleus. Reduces aromatic alpha-keto amides, aliphatic and aromatic alpha-keto esters, but not beta-keto esters. The sequence is that of NADPH-dependent alpha-keto amide reductase from Saccharomyces cerevisiae (strain ATCC 204508 / S288c) (Baker's yeast).